The following is a 324-amino-acid chain: MYLPSLVLGLLGFGLTASTSPIEERSNRSKAPAGCLTVGSSGTYATIGAALSALGSSTSDACIFIGAGTYQEQITIDYKGKLTMYGETTDTSSYKQNLVTITHSISSPEAGSLDKSATVNVRSDGFKMYNINVINGYGKGAQAVTLVANADKLGFYGCSFVGYQDTLYAKAGRQYYSNCYIEGAVDYIFGDASAWFGECDLVSVGPGYITAMSRTTADETTWYAIDHCNIYGKPGVDLTSAVYLGRPWRVLARVIFQNSQLSNIINPKGWSPMATGATPLYYEYNNKGAGADTSKREYESPISGAVSIATVLGGGWNSWVDTTY.

Positions 1–19 (MYLPSLVLGLLGFGLTAST) are cleaved as a signal peptide. N27 carries an N-linked (GlcNAc...) asparagine glycan. Position 142 (Q142) interacts with substrate. D165 serves as the catalytic Proton donor. The active-site Nucleophile is the D186. The substrate site is built by R246 and W248.

This sequence belongs to the pectinesterase family.

The protein resides in the secreted. The enzyme catalyses [(1-&gt;4)-alpha-D-galacturonosyl methyl ester](n) + n H2O = [(1-&gt;4)-alpha-D-galacturonosyl](n) + n methanol + n H(+). Its pathway is glycan metabolism; pectin degradation; 2-dehydro-3-deoxy-D-gluconate from pectin: step 1/5. In terms of biological role, involved in maceration and soft-rotting of plant tissue. In Aspergillus fumigatus (strain CBS 144.89 / FGSC A1163 / CEA10) (Neosartorya fumigata), this protein is Probable pectinesterase A (pmeA).